The sequence spans 680 residues: DNA ligase (680 aa).

NAD(+) is bound by residues Asp44 to Asp48, Ser93 to Met94, and Glu125. Lys127 serves as the catalytic N6-AMP-lysine intermediate. NAD(+) contacts are provided by Arg148, Glu182, Lys298, and Lys322. The Zn(2+) site is built by Cys416, Cys419, Cys434, and Cys439. Positions Asn600–Gln680 constitute a BRCT domain.

Belongs to the NAD-dependent DNA ligase family. LigA subfamily. Mg(2+) is required as a cofactor. It depends on Mn(2+) as a cofactor.

The catalysed reaction is NAD(+) + (deoxyribonucleotide)n-3'-hydroxyl + 5'-phospho-(deoxyribonucleotide)m = (deoxyribonucleotide)n+m + AMP + beta-nicotinamide D-nucleotide.. DNA ligase that catalyzes the formation of phosphodiester linkages between 5'-phosphoryl and 3'-hydroxyl groups in double-stranded DNA using NAD as a coenzyme and as the energy source for the reaction. It is essential for DNA replication and repair of damaged DNA. This chain is DNA ligase, found in Limosilactobacillus reuteri (strain DSM 20016) (Lactobacillus reuteri).